The following is a 293-amino-acid chain: Heterogeneous nuclear ribonucleoprotein C-like 4 (293 aa).

The RRM domain maps to 16–87 (SRVFIGNLNT…QVVDINLAAE (72 aa)). 2 disordered regions span residues 140-177 (VVPSKRQRISGNTSRRGKSGFNSKSGKRGSSKSGKLKG) and 208-293 (HCKQ…QDDS). The stretch at 177 to 208 (GDDLQAIKQELTQIKQKVDSLLENLEKIEKEH) forms a coiled coil. Composition is skewed to basic and acidic residues over residues 208–222 (HCKQGVEVKNAKSEE) and 229–240 (SKKDKTHVKMES). Positions 242–263 (GGADDSVEEGDLLCDDDNEDQG) are enriched in acidic residues. Residues 269–293 (LIKDDEKGAEEGEDDRDRANGQDDS) are compositionally biased toward basic and acidic residues.

The protein belongs to the RRM HNRPC family. RALY subfamily.

The protein resides in the nucleus. This is Heterogeneous nuclear ribonucleoprotein C-like 4 from Homo sapiens (Human).